We begin with the raw amino-acid sequence, 265 residues long: Hydroxyethylthiazole kinase (265 aa).

Met-36 lines the substrate pocket. ATP contacts are provided by Lys-112 and Ser-160. Residue Gly-187 coordinates substrate.

It belongs to the Thz kinase family. The cofactor is Mg(2+).

The catalysed reaction is 5-(2-hydroxyethyl)-4-methylthiazole + ATP = 4-methyl-5-(2-phosphooxyethyl)-thiazole + ADP + H(+). It functions in the pathway cofactor biosynthesis; thiamine diphosphate biosynthesis; 4-methyl-5-(2-phosphoethyl)-thiazole from 5-(2-hydroxyethyl)-4-methylthiazole: step 1/1. Catalyzes the phosphorylation of the hydroxyl group of 4-methyl-5-beta-hydroxyethylthiazole (THZ). The sequence is that of Hydroxyethylthiazole kinase from Clostridium perfringens (strain ATCC 13124 / DSM 756 / JCM 1290 / NCIMB 6125 / NCTC 8237 / Type A).